Consider the following 76-residue polypeptide: Conotoxin TxMEKL-011 (76 aa).

Residues 1 to 19 form the signal peptide; the sequence is MEKLTILLLVAAVLMSTQA. Residues 20-45 constitute a propeptide that is removed on maturation; the sequence is LVERAGENRSKENIKFLLKRKRAADR. 3 disulfides stabilise this stretch: Cys51/Cys65, Cys58/Cys69, and Cys64/Cys73.

This sequence belongs to the conotoxin O2 superfamily. In terms of tissue distribution, expressed by the venom duct.

The protein localises to the secreted. The protein is Conotoxin TxMEKL-011 of Conus textile (Cloth-of-gold cone).